Consider the following 388-residue polypeptide: T-cell surface glycoprotein CD1e, membrane-associated (388 aa).

An N-terminal signal peptide occupies residues 1 to 19 (MLLLFLLFEGLCCPGENTA). A propeptide spans 20 to 31 (APQALQSYHLAA) (removed in sCD1e). N-linked (GlcNAc...) asparagine glycans are attached at residues Asn-47 and Asn-84. The 111-residue stretch at 191-301 (PRFLAGLMEA…LGGHDLIIHW (111 aa)) folds into the Ig-like domain. The cysteines at positions 230 and 285 are disulfide-linked. A helical transmembrane segment spans residues 305 to 325 (SIFLILICLTVIVTLVILVVV).

In terms of assembly, heterodimer with B2M (beta-2-microglobulin). The association with B2M appears to be facilitated by the presence of the propeptide. In terms of processing, mono-ubiquitinated. Proteolytically cleaved in late endosomes to yield a soluble form. In terms of tissue distribution, expressed on cortical thymocytes, dendritic cells, Langerhans cells, on certain T-cell leukemias, and in various other tissues.

Its subcellular location is the golgi apparatus membrane. It is found in the early endosome. The protein resides in the late endosome. The protein localises to the lysosome lumen. Its function is as follows. T-cell surface glycoprotein CD1e, soluble binds diacetylated lipids, including phosphatidyl inositides and diacylated sulfoglycolipids, and is required for the presentation of glycolipid antigens on the cell surface. The membrane-associated form is not active. The polypeptide is T-cell surface glycoprotein CD1e, membrane-associated (CD1E) (Homo sapiens (Human)).